We begin with the raw amino-acid sequence, 327 residues long: Methionyl-tRNA formyltransferase (327 aa).

A (6S)-5,6,7,8-tetrahydrofolate-binding site is contributed by 121-124; that stretch reads SLLP.

The protein belongs to the Fmt family.

The catalysed reaction is L-methionyl-tRNA(fMet) + (6R)-10-formyltetrahydrofolate = N-formyl-L-methionyl-tRNA(fMet) + (6S)-5,6,7,8-tetrahydrofolate + H(+). Its function is as follows. Attaches a formyl group to the free amino group of methionyl-tRNA(fMet). The formyl group appears to play a dual role in the initiator identity of N-formylmethionyl-tRNA by promoting its recognition by IF2 and preventing the misappropriation of this tRNA by the elongation apparatus. This is Methionyl-tRNA formyltransferase from Burkholderia ambifaria (strain MC40-6).